The chain runs to 147 residues: Ribosome maturation factor RimP (147 aa).

Belongs to the RimP family.

The protein resides in the cytoplasm. Its function is as follows. Required for maturation of 30S ribosomal subunits. The protein is Ribosome maturation factor RimP of Thermosipho melanesiensis (strain DSM 12029 / CIP 104789 / BI429).